Consider the following 588-residue polypeptide: Pre-mRNA-splicing ATP-dependent RNA helicase PRP28 (588 aa).

A disordered region spans residues 15–94 (NKKKGLDENT…PSKQNGSKFH (80 aa)). Basic and acidic residues-rich tracts occupy residues 35-49 (NKQE…KENE) and 60-83 (AKVE…DKKR). Ser69 carries the post-translational modification Phosphoserine. A Q motif motif is present at residues 172–202 (RNWEELNIIPRDLLRVIIQELRFPSPTPIQR). Residues 208–399 (VCNMKQYRDF…AGYMQKPVYA (192 aa)) enclose the Helicase ATP-binding domain. An ATP-binding site is contributed by 221-228 (ASTGSGKT). The short motif at 341 to 344 (DEAD) is the DEAD box element. The Helicase C-terminal domain occupies 427 to 579 (KLKPIVAKYD…EAVKNKYNVG (153 aa)).

The protein belongs to the DEAD box helicase family. DDX23/PRP28 subfamily. As to quaternary structure, component of the U5 snRNP complex, composed of at least BRR2, PRP8, PRP28, DIB1, LIN1, SMB1, SMD1, SMD2, SMD3, SME1, SMX2, SMX3, and SNU114, associated with the U5 snRNA.

It localises to the cytoplasm. The protein resides in the nucleus. It carries out the reaction ATP + H2O = ADP + phosphate + H(+). ATP-dependent RNA helicase involved in mRNA splicing. May destabilize the U1/5'-splice site duplex to permit an effective competition for the 5'-splice site by the U6 snRNA, resulting in the switch between U1 and U6 at the 5'-splice site. May also act to unwind the U4/U6 base-pairing interaction in the U4/U6/U5 snRNP, facilitating the first covalent step of splicing. The polypeptide is Pre-mRNA-splicing ATP-dependent RNA helicase PRP28 (PRP28) (Saccharomyces cerevisiae (strain ATCC 204508 / S288c) (Baker's yeast)).